The chain runs to 456 residues: Probable galactarate/D-glucarate transporter GudP (456 aa).

Helical transmembrane passes span 11 to 31, 51 to 71, 78 to 96, 102 to 119, 246 to 266, 280 to 300, 317 to 337, 341 to 361, 381 to 401, and 408 to 428; these read YLIL…RATI, YIFS…GWLL, KVYA…LQGY, ISTA…VGLA, IYLG…WFPV, GIIA…GGVI, TPIV…YVDA, VVCF…GWAV, FGNL…AATG, and SSWV…VGEI.

This sequence belongs to the major facilitator superfamily. Phthalate permease family.

Its subcellular location is the cell inner membrane. The catalysed reaction is galactarate(in) + H(+)(in) = galactarate(out) + H(+)(out). The enzyme catalyses D-glucarate(in) + H(+)(in) = D-glucarate(out) + H(+)(out). Its function is as follows. Probably involved in the uptake of galactarate and/or D-glucarate. The sequence is that of Probable galactarate/D-glucarate transporter GudP (gudP) from Pseudomonas putida (Arthrobacter siderocapsulatus).